A 219-amino-acid chain; its full sequence is Ras-related protein Rab-3D (219 aa).

Position 2 is an N-acetylalanine (Ala2). 29-37 (GNSSVGKTS) provides a ligand contact to GDP. GTP is bound by residues Ser31, Ser32, Val33, Gly34, Lys35, Thr36, Ser37, Pro49, and Ser53. A Mg(2+)-binding site is contributed by Thr36. The Switch 1 signature appears at 49–58 (PAFVSTVGID). Mg(2+) contacts are provided by Thr54 and Asp77. Gly80 lines the GTP pocket. Residues 80 to 96 (GQERYRTITTAYYRGAM) carry the Switch 2 motif. Phosphothreonine; by LRRK2 is present on Thr86. The GTP site is built by Asn135, Lys136, Asp138, Ala166, and Lys167. GDP is bound by residues 135–138 (NKCD) and 165–167 (SAK). Residue Ser190 is modified to Phosphoserine. The disordered stretch occupies residues 190 to 219 (SLEPSSSPGSNGKGPALGDTPPPQPSSCSC). Low complexity predominate over residues 193-203 (PSSSPGSNGKG). Residues 209–219 (TPPPQPSSCSC) show a composition bias toward pro residues. Residues Cys217 and Cys219 are each lipidated (S-geranylgeranyl cysteine). Cysteine methyl ester is present on Cys219.

The protein belongs to the small GTPase superfamily. Rab family. As to quaternary structure, interacts with RIMS1, RIMS2, RPH3A, RPH3AL and RAB3IP. The GTP-bound form interacts with REP15. Interacts with CHM and CHML; phosphorylation at Thr-86 disrupts these interactions. Interacts with MADD (via uDENN domain); the GTP-bound form is preferred for interaction. The cofactor is Mg(2+). Post-translationally, phosphorylation of Thr-86 in the switch II region by LRRK2 prevents the association of RAB regulatory proteins, including CHM and CHML. As to expression, predominantly expressed in the adipocyte tissue, but is also expressed in several other organs including skin, spleen, heart and lung.

It is found in the cell membrane. It catalyses the reaction GTP + H2O = GDP + phosphate + H(+). Regulated by guanine nucleotide exchange factors (GEFs) which promote the exchange of bound GDP for free GTP. Regulated by GTPase activating proteins (GAPs) which increase the GTP hydrolysis activity. Inhibited by GDP dissociation inhibitors (GDIs) which prevent Rab-GDP dissociation. Functionally, the small GTPases Rab are key regulators of intracellular membrane trafficking, from the formation of transport vesicles to their fusion with membranes. Rabs cycle between an inactive GDP-bound form and an active GTP-bound form that is able to recruit to membranes different sets of downstream effectors directly responsible for vesicle formation, movement, tethering and fusion. RAB3D may be involved in the insulin-induced exocytosis of GLUT4-containing vesicles in adipocytes. This chain is Ras-related protein Rab-3D, found in Mus musculus (Mouse).